The sequence spans 223 residues: MDVPSSWDALRKQARKIEAQLDEQMHSYRRLVSTKALSKSDGNESDLEAGIDLLLRQLQQVNAQMQAWVSSGGSEMVSHTLTRHQEILQDLTQEFYRHRSSLRAKQEHASLLEDFREFDRTRLDLEDGYGSEQALIKEHMGINRNTAQMDGVISQAQATLGTLVFQRSTFGGINSKLSNVASRLPTVNTILAAIKRKKSMDTIILSLVAAVCTFLIFIYWITK.

Over 1-201 the chain is Cytoplasmic; the sequence is MDVPSSWDAL…AAIKRKKSMD (201 aa). Residues 8 to 67 adopt a coiled-coil conformation; that stretch reads DALRKQARKIEAQLDEQMHSYRRLVSTKALSKSDGNESDLEAGIDLLLRQLQQVNAQMQA. A helical; Anchor for type IV membrane protein membrane pass occupies residues 202–222; that stretch reads TIILSLVAAVCTFLIFIYWIT. K223 is a topological domain (vesicular).

This sequence belongs to the GOSR1 family. As to quaternary structure, component of several multiprotein Golgi SNARE complexes.

It localises to the golgi apparatus membrane. In terms of biological role, involved in transport from the ER to the Golgi apparatus as well as in intra-Golgi transport. It belongs to a super-family of proteins called t-SNAREs or soluble NSF (N-ethylmaleimide-sensitive factor) attachment protein receptor. In Arabidopsis thaliana (Mouse-ear cress), this protein is Golgi SNAP receptor complex member 1-1 (GOS11).